Here is a 303-residue protein sequence, read N- to C-terminus: Probable 5-dehydro-4-deoxyglucarate dehydratase (303 aa).

The protein belongs to the DapA family.

It carries out the reaction 5-dehydro-4-deoxy-D-glucarate + H(+) = 2,5-dioxopentanoate + CO2 + H2O. The protein operates within carbohydrate acid metabolism; D-glucarate degradation; 2,5-dioxopentanoate from D-glucarate: step 2/2. The chain is Probable 5-dehydro-4-deoxyglucarate dehydratase from Delftia acidovorans (strain DSM 14801 / SPH-1).